A 714-amino-acid chain; its full sequence is Polyribonucleotide nucleotidyltransferase (714 aa).

2 residues coordinate Mg(2+): D487 and D493. Positions 554–613 (PRIEVMTIPVDKIREVIGSGGKVIREIVEKTGAKINIEDDGTIKIASASGKEIEAARKWI) constitute a KH domain. An S1 motif domain is found at 623-691 (GVVYEGTVVK…ERGKVRLSMK (69 aa)).

This sequence belongs to the polyribonucleotide nucleotidyltransferase family. It depends on Mg(2+) as a cofactor.

It is found in the cytoplasm. It carries out the reaction RNA(n+1) + phosphate = RNA(n) + a ribonucleoside 5'-diphosphate. Its function is as follows. Involved in mRNA degradation. Catalyzes the phosphorolysis of single-stranded polyribonucleotides processively in the 3'- to 5'-direction. The polypeptide is Polyribonucleotide nucleotidyltransferase (Allorhizobium ampelinum (strain ATCC BAA-846 / DSM 112012 / S4) (Agrobacterium vitis (strain S4))).